Consider the following 66-residue polypeptide: Potassium channel toxin alpha-KTx 30.3 (66 aa).

The N-terminal stretch at 1 to 24 (MNKTFFLVVIMATVLVLAFDATDA) is a signal peptide. Disulfide bonds link Cys30–Cys50, Cys36–Cys55, and Cys40–Cys57.

It belongs to the short scorpion toxin superfamily. Potassium channel inhibitor family. Alpha-KTx 30 subfamily. Expressed by the venom gland.

The protein localises to the secreted. Its function is as follows. inhibits Kv1.3/KCNA3 channel. The chain is Potassium channel toxin alpha-KTx 30.3 from Scorpiops jendeki (Scorpion).